The following is a 728-amino-acid chain: MSDRIDRDVINALIAGHFADPFSVLGMHKTTAGLEVRALLPDATDVWVIEPKTGRKLAKLECLDSRGFFSGVIPRRKNFFRYQLAVVWHGQQNLIDDPYRFGPLIQEMDAWLLSEGTHLRPYETLGAHADTMDGVTGTRFSVWAPNARRVSVVGQFNYWDGRRHPMRLRKESGIWELFIPGAHNGQLYKYEMIDANGNLRLKSDPYAFEAQMRPETASLICGLPEKVVQTEERKKANQFDAPISIYEVHLGSWRRHTDNNFWLSYRELADQLVPYAKWMGFTHLELLPINEHPFDGSWGYQPTGLYAPTRRFGTRDDFRYFIDAAHAAGLNVILDWVPGHFPTDDFALAEFDGTNLYEHSDPREGYHQDWNTLIYNYGRREVSNFLVGNALYWIERFGIDALRVDAVASMIYRDYSRKEGEWIPNEFGGRENLEAIEFLRNTNRILGEQVSGAVTMAEESTDFPGVSRPQDMGGLGFWYKWNLGWMHDTLDYMKLDPIYRQYHHDKLTFGMLYNYTENFVLPLSHDEVVHGKKSILDRMPGDAWQKFASLRAYYGWMWAFPGKKLLFMGNEFAQAREWNHDASLDWHLLEGGDNWHHGVQRLVRDLNLTYRHHKAMHELDFDPYGFEWLVVDDKERSVLIFVRRDKEGNEIIVASNFTPVPRHDYRFGINQPGKWREILNTDSIHYHGSNAGNGGTVHSDEIASHGRQHSLSLTLPPLATIWLVREAE.

The active-site Nucleophile is Asp-405. The Proton donor role is filled by Glu-458.

The protein belongs to the glycosyl hydrolase 13 family. GlgB subfamily. Monomer.

The enzyme catalyses Transfers a segment of a (1-&gt;4)-alpha-D-glucan chain to a primary hydroxy group in a similar glucan chain.. Its pathway is glycan biosynthesis; glycogen biosynthesis. Its function is as follows. Catalyzes the formation of the alpha-1,6-glucosidic linkages in glycogen by scission of a 1,4-alpha-linked oligosaccharide from growing alpha-1,4-glucan chains and the subsequent attachment of the oligosaccharide to the alpha-1,6 position. This Shigella flexneri serotype 5b (strain 8401) protein is 1,4-alpha-glucan branching enzyme GlgB.